The primary structure comprises 194 residues: Protein GrpE (194 aa).

Residues 1–12 (MSSKEQNTPNEQ) show a composition bias toward polar residues. A disordered region spans residues 1 to 39 (MSSKEQNTPNEQASDEIETEQAKNQGADTAAEAADQRDE).

This sequence belongs to the GrpE family. As to quaternary structure, homodimer.

It is found in the cytoplasm. In terms of biological role, participates actively in the response to hyperosmotic and heat shock by preventing the aggregation of stress-denatured proteins, in association with DnaK and GrpE. It is the nucleotide exchange factor for DnaK and may function as a thermosensor. Unfolded proteins bind initially to DnaJ; upon interaction with the DnaJ-bound protein, DnaK hydrolyzes its bound ATP, resulting in the formation of a stable complex. GrpE releases ADP from DnaK; ATP binding to DnaK triggers the release of the substrate protein, thus completing the reaction cycle. Several rounds of ATP-dependent interactions between DnaJ, DnaK and GrpE are required for fully efficient folding. In Erwinia tasmaniensis (strain DSM 17950 / CFBP 7177 / CIP 109463 / NCPPB 4357 / Et1/99), this protein is Protein GrpE.